The sequence spans 313 residues: Olfactory receptor 10Z1 (313 aa).

Over 1–25 (MGQTNVTSWRDFVFLGFSSSGELQL) the chain is Extracellular. N5 carries an N-linked (GlcNAc...) asparagine glycan. Residues 26 to 46 (LLFALFLSLYLVTLTSNVFII) form a helical membrane-spanning segment. Residues 47-54 (IAIRLDSH) lie on the Cytoplasmic side of the membrane. Residues 55 to 75 (LHTPMYLFLSFLSFSETCYTL) traverse the membrane as a helical segment. The Extracellular segment spans residues 76–99 (GIIPRMLSGLAGGDQAISYVGCAA). C97 and C189 are joined by a disulfide. The helical transmembrane segment at 100–120 (QMFFSASWACTNCFLLAAMGF) threads the bilayer. Residues 121 to 139 (DRYVAICAPLHYASHMNPT) lie on the Cytoplasmic side of the membrane. The helical transmembrane segment at 140-160 (LCAQLVITSFLTGYLFGLGMT) threads the bilayer. The Extracellular portion of the chain corresponds to 161-197 (LVIFHLSFCSSHEIQHFFCDTPPVLSLACGDTGPSEL). Residues 198 to 217 (RIFILSLLVLLVSFFFITIS) form a helical membrane-spanning segment. Residues 218–237 (YAYILAAILRIPSAEGQKKA) are Cytoplasmic-facing. Residues 238–258 (FSTCASHLTVVIIHYGCASFV) traverse the membrane as a helical segment. The Extracellular segment spans residues 259–271 (YLRPKASYSLERD). A helical membrane pass occupies residues 272–292 (QLIAMTYTVVTPLLNPIVYSL). At 293-313 (RNRAIQTALRNAFRGRLLGKG) the chain is on the cytoplasmic side.

It belongs to the G-protein coupled receptor 1 family.

The protein resides in the cell membrane. Functionally, odorant receptor. This chain is Olfactory receptor 10Z1 (OR10Z1), found in Homo sapiens (Human).